A 487-amino-acid chain; its full sequence is L-tartrate/succinate antiporter (487 aa).

Transmembrane regions (helical) follow at residues 10–30 (YLAPLAVIAIIALIPVPAGLE), 33–53 (TWLYFAVFTGVIVGLILEPVP), 54–74 (GAVVAMVGISIIAILSPWLLF), 93–113 (WAVSGFSNSVIWLIFAAFMFG), 137–157 (TLFLGYAVMFSELILAPVTPS), 189–209 (IGSYIMWMGIVADCVTSAIFL), 236–256 (FLGMLPLSILLVLLVPWLAYV), 292–312 (LIVGALVLWIFGGDYIDAAMV), 313–333 (GYSVVALMLLLRIISWDDIVS), 340–360 (VFFWLASLITLATGLNNTGFI), 370–390 (SLSGYSPTMVMVALIVVFYLL), 393–413 (FFASATAYTSALAPMMIAAAL), 418–438 (IPLPVFCLMVGAAIGLGSILT), and 465–485 (IFGLIFLVLLVITGLLWMPVV).

Belongs to the SLC13A/DASS transporter (TC 2.A.47) family. DIT1 subfamily.

The protein resides in the cell inner membrane. It carries out the reaction (2R,3R)-tartrate(out) + succinate(in) = (2R,3R)-tartrate(in) + succinate(out). Catalyzes the uptake of tartrate in exchange for intracellular succinate. Essential for anaerobic L-tartrate fermentation. The sequence is that of L-tartrate/succinate antiporter (ttdT) from Shigella sonnei (strain Ss046).